Consider the following 512-residue polypeptide: Eukaryotic translation initiation factor 3 subunit L (512 aa).

Positions 291–477 constitute a PCI domain; that stretch reads DAFRLFESIL…GERQFTDSVD (187 aa).

This sequence belongs to the eIF-3 subunit L family. Component of the eukaryotic translation initiation factor 3 (eIF-3) complex.

Its subcellular location is the cytoplasm. In terms of biological role, component of the eukaryotic translation initiation factor 3 (eIF-3) complex, which is involved in protein synthesis of a specialized repertoire of mRNAs and, together with other initiation factors, stimulates binding of mRNA and methionyl-tRNAi to the 40S ribosome. The eIF-3 complex specifically targets and initiates translation of a subset of mRNAs involved in cell proliferation. In Monosiga brevicollis (Choanoflagellate), this protein is Eukaryotic translation initiation factor 3 subunit L.